We begin with the raw amino-acid sequence, 166 residues long: Disulfide bond formation protein B (166 aa).

Topologically, residues 1-11 (MIALPRNRRPL) are cytoplasmic. The helical transmembrane segment at 12–28 (FLAVFAYCAALLAFGLY) threads the bilayer. At 29–46 (LQHYQGIEPCPMCIMQRY) the chain is on the periplasmic side. A disulfide bridge connects residues C38 and C41. The helical transmembrane segment at 47 to 63 (AFALVGVIALVAGLHGP) threads the bilayer. Residues 64 to 70 (RGAGVRV) are Cytoplasmic-facing. The helical transmembrane segment at 71 to 87 (YGGLLLLTALAGGSVAA) threads the bilayer. The Periplasmic portion of the chain corresponds to 88–143 (RQTWMQLYPPEIPECGPGLEYMLESFPLTSALPMIFRGAGDCSAIDWTFLGLSLAN). A disulfide bridge connects residues C102 and C129. Residues 144 to 162 (WSLLNFGAAALLALWLLFG) traverse the membrane as a helical segment. Topologically, residues 163–166 (RRVR) are cytoplasmic.

Belongs to the DsbB family.

It is found in the cell inner membrane. In terms of biological role, required for disulfide bond formation in some periplasmic proteins. Acts by oxidizing the DsbA protein. The chain is Disulfide bond formation protein B from Azoarcus sp. (strain BH72).